Consider the following 1243-residue polypeptide: Plasma membrane calcium-transporting ATPase 2 (1243 aa).

Residues 1 to 13 (MGDMTNSDFYSKN) are compositionally biased toward polar residues. The tract at residues 1–24 (MGDMTNSDFYSKNQRNESSHGGEF) is disordered. The Cytoplasmic portion of the chain corresponds to 1–94 (MGDMTNSDFY…NFIPPKKPKT (94 aa)). S18 is subject to Phosphoserine. A helical transmembrane segment spans residues 95-115 (FLQLVWEALQDVTLIILEIAA). Residues 116–152 (IISLGLSFYHPPGEGNEGCATAQGGAEDEGEAEAGWI) lie on the Extracellular side of the membrane. The helical transmembrane segment at 153–173 (EGAAILLSVICVVLVTAFNDW) threads the bilayer. The Cytoplasmic portion of the chain corresponds to 174–390 (SKEKQFRGLQ…KEKSVLQGKL (217 aa)). Positions 334–381 (GKMQDGNVDASQSKAKQQDGAAAMEMQPLKSAEGGDADDRKKASMHKK) are disordered. A helical transmembrane segment spans residues 391-410 (TKLAVQIGKAGLVMSAITVI). The Extracellular portion of the chain corresponds to 411-443 (ILVLYFTVDTFVVNKKPWLPECTPVYVQYFVKF). The helical transmembrane segment at 444–461 (FIIGVTVLVVAVPEGLPL) threads the bilayer. Topologically, residues 462–875 (AVTISLAYSV…MWGRNVYDSI (414 aa)) are cytoplasmic. D499 acts as the 4-aspartylphosphate intermediate in catalysis. Residues D820 and D824 each contribute to the Mg(2+) site. The helical transmembrane segment at 876 to 895 (SKFLQFQLTVNVVAVIVAFT) threads the bilayer. At 896–905 (GACITQDSPL) the chain is on the extracellular side. A helical transmembrane segment spans residues 906–926 (KAVQMLWVNLIMDTFASLALA). Over 927 to 946 (TEPPTETLLLRKPYGRNKPL) the chain is Cytoplasmic. A helical membrane pass occupies residues 947-969 (ISRTMMKNILGHAVYQLALIFTL). At 970-987 (LFVGEKMFQIDSGRNAPL) the chain is on the extracellular side. The helical transmembrane segment at 988–1009 (HSPPSEHYTIIFNTFVMMQLFN) threads the bilayer. The Cytoplasmic segment spans residues 1010–1028 (EINARKIHGERNVFDGIFR). A helical membrane pass occupies residues 1029–1050 (NPIFCTIVLGTFAIQIVIVQFG). Residues 1051–1060 (GKPFSCSPLQ) lie on the Extracellular side of the membrane. A helical transmembrane segment spans residues 1061 to 1082 (LDQWMWCIFIGLGELVWGQVIA). Topologically, residues 1083 to 1243 (TIPTSRLKFL…SPIHSLETSL (161 aa)) are cytoplasmic. Residues E1120, R1132, and L1134 each carry the phosphoserine modification. Positions 1123–1140 (LRRGQILWFRGLNRIQTQ) are calmodulin-binding subdomain A. At T1139 the chain carries Phosphothreonine; by PKC. Residues 1141-1150 (IRVVKAFRSS) are calmodulin-binding subdomain B. A1146, L1151, S1163, H1165, D1177, and S1178 each carry phosphoserine. T1188 is subject to Phosphothreonine. The tract at residues 1194 to 1243 (AALKQNSSPPSSLNKNNSAIDSGINLTTDTSKSATSSSPGSPIHSLETSL) is disordered. 2 stretches are compositionally biased toward low complexity: residues 1196–1211 (LKQNSSPPSSLNKNNS) and 1220–1234 (TTDTSKSATSSSPGS). S1201 is modified (phosphoserine; by PKA). Phosphoserine is present on S1211.

Belongs to the cation transport ATPase (P-type) (TC 3.A.3) family. Type IIB subfamily. As to quaternary structure, interacts with PDZD11. Mainly expressed in brain cortex. Found in low levels in skeletal muscle, heart muscle, stomach, liver, kidney and lung. Isoforms containing segment B are found in brain cortex and at low levels in other tissues. Isoforms containing segments X and W are found at low levels in all tissues. Isoforms containing segment A and segment Z are found at low levels in skeletal muscle and heart muscle.

It is found in the cell membrane. It localises to the synapse. Its subcellular location is the apical cell membrane. The protein localises to the basolateral cell membrane. It carries out the reaction Ca(2+)(in) + ATP + H2O = Ca(2+)(out) + ADP + phosphate + H(+). Its activity is regulated as follows. Up-regulated by calmodulin which increases the affinity of the pump for Ca(2+) ions. ATP-driven Ca(2+) ion pump involved in the maintenance of basal intracellular Ca(2+) levels in specialized cells of cerebellar circuit and vestibular and cochlear systems. Uses ATP as an energy source to transport cytosolic Ca(2+) ions across the plasma membrane to the extracellular compartment. Has fast activation and Ca(2+) clearance rate suited to control fast neuronal Ca(2+) dynamics. At parallel fiber to Purkinje neuron synapse, mediates presynaptic Ca(2+) efflux in response to climbing fiber-induced Ca(2+) rise. Provides for fast return of Ca(2+) concentrations back to their resting levels, ultimately contributing to long-term depression induction and motor learning. Plays an essential role in hearing and balance. In cochlear hair cells, shuttles Ca(2+) ions from stereocilia to the endolymph and dissipates Ca(2+) transients generated by the opening of the mechanoelectrical transduction channels. Regulates Ca(2+) levels in the vestibular system, where it contributes to the formation of otoconia. In non-excitable cells, regulates Ca(2+) signaling through spatial control of Ca(2+) ions extrusion and dissipation of Ca(2+) transients generated by store-operated channels. In lactating mammary gland, allows for the high content of Ca(2+) ions in the milk. The chain is Plasma membrane calcium-transporting ATPase 2 from Homo sapiens (Human).